Here is a 323-residue protein sequence, read N- to C-terminus: Serine/threonine-protein phosphatase PP1-gamma catalytic subunit (323 aa).

N-acetylalanine is present on alanine 2. Residues aspartate 64, histidine 66, aspartate 92, and asparagine 124 each contribute to the Mn(2+) site. Catalysis depends on histidine 125, which acts as the Proton donor. 2 residues coordinate Mn(2+): histidine 173 and histidine 248. The tract at residues 302–323 (KKPNATRPVTPPRGMITKQAKK) is disordered. Phosphothreonine is present on residues threonine 307 and threonine 311.

This sequence belongs to the PPP phosphatase family. PP-1 subfamily. PP1 comprises a catalytic subunit, PPP1CA, PPP1CB or PPP1CC, which is folded into its native form by inhibitor 2 and glycogen synthetase kinase 3, and then complexed to one or several targeting or regulatory subunits. PPP1R12A, PPP1R12B and PPP1R12C mediate binding to myosin. PPP1R3A (in skeletal muscle), PPP1R3B (in liver), PPP1R3C, PPP1R3D and PPP1R3F (in brain) mediate binding to glycogen. Interacts with cyanobacterial toxin microcystin; disulfide-linked. Interacts with PPP1R3B and PPP1R7. Isoform 2 interacts with SPZ1. Interacts with CDCA2. PPP1R15A and PPP1R15B mediate binding to EIF2S1. Part of a complex containing PPP1R15B, PP1 and NCK1/2. Interacts with IKFZ1; the interaction targets PPP1CC to pericentromeric heterochromatin, dephosphorylates IKAROS, stabilizes it and prevents it from degradation. Interacts with PPP1R42; the interaction is direct. Interacts with NOM1 and PPP1R8. Component of the PTW/PP1 phosphatase complex, composed of PPP1R10/PNUTS, TOX4, WDR82, and PPP1CA or PPP1CB or PPP1CC. Interacts with PPP1R8. Interacts with isoform 1 and isoform 4 NEK2. Interacts with URI1; the interaction is phosphorylation-dependent and occurs in a growth factor-dependent manner. Interacts with FOXP3. Interacts with TMEM225 (via RVxF motif). Interacts with MKI67. Interacts with RRP1B; this targets PPP1CC to the nucleolus. Interacts with PPP1R2B. Found in a complex with PPP1CA, PPP1CC, SHC1 and PEAK1. Interacts with DYNLT4. Interacts (via RVxF motif) with FIRRM; regulates PLK1 kinase activity. Interacts with the KNL1 complex subunit KNL1; the interaction is direct and mutually exclusive with KNL1 binding to microtubules. Component of the SHOC2-MRAS-PP1c (SMP) complex consisting of SHOC2, GTP-bound M-Ras/MRAS and the catalytic subunit of protein phosphatase 1 (either PPP1CA, PPP1CB or PPP1CC). SHOC2 and PP1c preferably bind M-Ras/MRAS, but they also bind K-Ras/KRAS, N-Ras/NRAS and H-Ras/HRAS; these interactions are GTP-dependent and both SHOC2 and PP1c are required to form a stable complex. Interacts with SHOC2 in the absence of Ras GTPases. It depends on Mn(2+) as a cofactor. Phosphorylated by NEK2.

It localises to the cytoplasm. Its subcellular location is the nucleus. The protein resides in the nucleolus. The protein localises to the nucleoplasm. It is found in the nucleus speckle. It localises to the chromosome. Its subcellular location is the centromere. The protein resides in the kinetochore. The protein localises to the cleavage furrow. It is found in the midbody. It localises to the mitochondrion. Its subcellular location is the cytoskeleton. The protein resides in the microtubule organizing center. It catalyses the reaction O-phospho-L-seryl-[protein] + H2O = L-seryl-[protein] + phosphate. The catalysed reaction is O-phospho-L-threonyl-[protein] + H2O = L-threonyl-[protein] + phosphate. With respect to regulation, inactivated by binding to URI1. The phosphatase activity of the PPP1R15A-PP1 complex toward EIF2S1 is specifically inhibited by Salubrinal, a drug that protects cells from endoplasmic reticulum stress. In terms of biological role, protein phosphatase that associates with over 200 regulatory proteins to form highly specific holoenzymes which dephosphorylate hundreds of biological targets. Protein phosphatase 1 (PP1) is essential for cell division, and participates in the regulation of glycogen metabolism, muscle contractility and protein synthesis. Dephosphorylates RPS6KB1. Involved in regulation of ionic conductances and long-term synaptic plasticity. May play an important role in dephosphorylating substrates such as the postsynaptic density-associated Ca(2+)/calmodulin dependent protein kinase II. Component of the PTW/PP1 phosphatase complex, which plays a role in the control of chromatin structure and cell cycle progression during the transition from mitosis into interphase. In balance with CSNK1D and CSNK1E, determines the circadian period length, through the regulation of the speed and rhythmicity of PER1 and PER2 phosphorylation. May dephosphorylate CSNK1D and CSNK1E. Regulates the recruitment of the SKA complex to kinetochores. Dephosphorylates the 'Ser-418' residue of FOXP3 in regulatory T-cells (Treg) from patients with rheumatoid arthritis, thereby inactivating FOXP3 and rendering Treg cells functionally defective. Together with PPP1CA (PP1-alpha subunit), dephosphorylates IFIH1/MDA5 and RIG-I leading to their activation and a functional innate immune response. Core component of the SHOC2-MRAS-PP1c (SMP) holophosphatase complex that regulates the MAPK pathway activation. The SMP complex specifically dephosphorylates the inhibitory phosphorylation at 'Ser-259' of RAF1 kinase, 'Ser-365' of BRAF kinase and 'Ser-214' of ARAF kinase, stimulating their kinase activities. Dephosphorylates MKI67 at the onset of anaphase. The SMP complex enhances the dephosphorylation activity and substrate specificity of PP1c. This is Serine/threonine-protein phosphatase PP1-gamma catalytic subunit (PPP1CC) from Homo sapiens (Human).